The sequence spans 526 residues: MKFDIEEFKERRKTDFEGAWHAGPSVITPPESSKIYPRYAYRRAKVHPIFDTIARLRAAYMSMGFDEAMVPVFIDEQDVYRQFGPEAAAVLDRVYYVGGLPRPNVGISRERLDAIAEIIEKPLAEGTEEKLMKCLHAYKKGKFDGDDLTHEMSVALGVDDGVVVHILDTVFPEFKELAPESSRTTLRSHMTSGWFISLAQMWDKKPMPIRMFSVDRCFRREQEEDATHLRTYHSASCIVAGEDVTVEEGKAVAEGLLSAFGFTEFRFQPDEKRSKYYMPETQTEVYGKHPVHGWVEVATFGIYSPAALAEYGVGVPVMNLGMGVERLAMVLTQAEDVRKLSFAQLYPPVYSDTDLTKGIGLREEPQTAEGRRAVRAVMETAAAHAAERSPCSFPAWKGELYGHQVEIVVEEPEENTSLLGPAALNEVYVRKGAVLGVPDTEKFADVKAEGVPVGISFLYSTANLALARIEEAARVGEGTSIQVKMSKHPSDVNLKIEEYVMRYITDNKKKLDLRGPVFMTITSKIL.

Residues 189-191 (HMT), 234-236 (SAS), 276-277 (YY), and Asn319 each bind substrate.

The protein belongs to the class-II aminoacyl-tRNA synthetase family. O-phosphoseryl-tRNA(Cys) synthetase subfamily. Homotetramer. Interacts with SepCysS.

The catalysed reaction is tRNA(Cys) + O-phospho-L-serine + ATP = O-phospho-L-seryl-tRNA(Cys) + AMP + diphosphate. In terms of biological role, catalyzes the attachment of O-phosphoserine (Sep) to tRNA(Cys). The polypeptide is O-phosphoserine--tRNA(Cys) ligase (Methanocorpusculum labreanum (strain ATCC 43576 / DSM 4855 / Z)).